We begin with the raw amino-acid sequence, 67 residues long: DNA-directed RNA polymerase subunit omega (67 aa).

This sequence belongs to the RNA polymerase subunit omega family. As to quaternary structure, the RNAP catalytic core consists of 2 alpha, 1 beta, 1 beta' and 1 omega subunit. When a sigma factor is associated with the core the holoenzyme is formed, which can initiate transcription.

The catalysed reaction is RNA(n) + a ribonucleoside 5'-triphosphate = RNA(n+1) + diphosphate. In terms of biological role, promotes RNA polymerase assembly. Latches the N- and C-terminal regions of the beta' subunit thereby facilitating its interaction with the beta and alpha subunits. The polypeptide is DNA-directed RNA polymerase subunit omega (Dictyoglomus turgidum (strain DSM 6724 / Z-1310)).